The primary structure comprises 281 residues: Survival motor neuron protein 1 (281 aa).

Disordered regions lie at residues 1 to 20 (MANG…SDDS) and 42 to 77 (ALKG…NAAP). A Phosphothreonine modification is found at Thr14. Residues Ser17 and Ser20 each carry the phosphoserine modification. Residues 59–73 (KKRKNNKKNKSRKRC) are compositionally biased toward basic residues. The 61-residue stretch at 80-140 (EWQVGDSCYA…LTEPPDMDED (61 aa)) folds into the Tudor domain. A compositionally biased stretch (basic and acidic residues) spans 145 to 159 (ANVKETESSTEESDR). The disordered stretch occupies residues 145–242 (ANVKETESST…PMSPDFGEDD (98 aa)). Composition is skewed to pro residues over residues 179–197 (MGPP…PPPP) and 212–235 (PSFP…PPMS). Residues 225–252 (PPMIPPPPPMSPDFGEDDEALGSMLISW) are P2 (binding site for SNRPB). Positions 264–279 (GLRQGRKEAAASKKSH) are required for interaction with SYNCRIP.

The protein belongs to the SMN family. Homodimer. Component of an import snRNP complex composed of kpnb1, rnut1, smn1 and znf259. Part of the core SMN complex that contains smn1, gemin2/sip1, ddx20/gemin3, gemin4, gemin5, gemin6, gemin7, gemin8 and strap/unrip. Interacts with ddx20, fbl, nola1, rnut1, syncrip and with several spliceosomal snRNP core Sm proteins, including snrpb, snrpd1, snrpd2, snrpd3, snrpe and ilf3. Interacts with elavl4.

It localises to the nucleus. Its subcellular location is the gem. It is found in the cajal body. The protein resides in the cytoplasm. The protein localises to the cytoplasmic granule. It localises to the perikaryon. Its subcellular location is the cell projection. It is found in the neuron projection. The protein resides in the myofibril. The protein localises to the sarcomere. It localises to the z line. Functionally, the SMN complex plays an essential role in spliceosomal snRNP assembly in the cytoplasm and is required for pre-mRNA splicing in the nucleus. It may also play a role in the metabolism of snoRNPs. Required in motor neurons and proprioceptive neurons to ensure correct U12 intron splicing and proper levels of tmem41b mRNA. Required for the maturation of motor neuron axonal branches and dendrites. The sequence is that of Survival motor neuron protein 1 (smn1) from Danio rerio (Zebrafish).